A 678-amino-acid polypeptide reads, in one-letter code: MAANVGSMSQYWKRFDLQQLQRELDAAATVLANRQDESEQSRKRLIEQSREFKKNTPEDLRKQVAPLLKSFQGEIDALSKRSKEAEAAFLTVYKRLIDVPDPVPALDVGQQLEIKVQRLHDIETENQKLRETLEEYNKEFAEVKNQEVTIKALKEKIREYEQTLKSQAETIALEKEQKLQNDFAEKERKLQETQMSTTSKLEEAEHKLQTLQTALEKTRTELFDLKTKYDEETTAKADEIEMIMTDLERANQRAEVAQREAETLREQLSSANHSLQLASQIQKAPDVEQAIEVLTRSSLEVELAAKEREIAQLVEDVQRLQASLTKLRENSASQISQLEQQLNAKNSTLKQLEEKLKGQADYEEVKKELNTLKSMEFAPSEGAGTQDSTKPLEVLLLEKNRSLQSENATLRISNSDLSGRCAELQIHLTEATAKAVEQKELIARLEQDLSTIQSIQRPDAEGASEQGLEKIPEPIKEATALFYGPSMSSSGTLPEGQVDSLLSIISSQRERFRTRNQELEAESRMAQHTIQALQSELDSLRADNIKLFEKIKFLQSYPGRGIGSDDTELRYSSQYEERLDPFSSFSKRERQRKYLGLSPWDKATLGMGRLILSNKTARTIGFFYTLFLHCLVFLVLYKLAWSESVERDCAATCAKKFADHLHKFHESDNGAAAGDLWQ.

Residues 1–619 (MAANVGSMSQ…LILSNKTART (619 aa)) are Cytoplasmic-facing. 4 coiled-coil regions span residues 16–40 (DLQQ…ESEQ), 67–374 (LLKS…TLKS), 427–454 (HLTE…TIQS), and 502–556 (LSII…FLQS). A Phosphoserine modification is found at serine 586. A helical; Anchor for type IV membrane protein transmembrane segment spans residues 620–640 (IGFFYTLFLHCLVFLVLYKLA). Topologically, residues 641–678 (WSESVERDCAATCAKKFADHLHKFHESDNGAAAGDLWQ) are lumenal.

This sequence belongs to the CASP family. In terms of assembly, homodimer; disulfide-linked. Interacts with GOLGA5. In terms of tissue distribution, ubiquitously expressed.

The protein localises to the golgi apparatus membrane. Its function is as follows. May be involved in intra-Golgi retrograde transport. This is Protein CASP (Cux1) from Mus musculus (Mouse).